We begin with the raw amino-acid sequence, 343 residues long: Undecaprenyl-diphosphatase 2 (343 aa).

The next 4 membrane-spanning stretches (helical) occupy residues 21–41 (LFPV…GGSW), 57–77 (PYLT…LVFF), 104–124 (LAWL…ALEH), and 129–149 (LFAK…ILLA). Positions 179–193 (VPAPATVPTQTTSAP) are enriched in low complexity. Residues 179-202 (VPAPATVPTQTTSAPGGRATARHT) form a disordered region. Transmembrane regions (helical) follow at residues 225–245 (AGVI…RSGI), 265–285 (FLLA…ALAG), 294–314 (QVIL…RFLV), and 322–342 (LTPF…RFAI).

Belongs to the UppP family.

The protein localises to the cell membrane. The catalysed reaction is di-trans,octa-cis-undecaprenyl diphosphate + H2O = di-trans,octa-cis-undecaprenyl phosphate + phosphate + H(+). In terms of biological role, catalyzes the dephosphorylation of undecaprenyl diphosphate (UPP). Confers resistance to bacitracin. This Frankia alni (strain DSM 45986 / CECT 9034 / ACN14a) protein is Undecaprenyl-diphosphatase 2.